Here is a 122-residue protein sequence, read N- to C-terminus: Large ribosomal subunit protein bL12 (122 aa).

It belongs to the bacterial ribosomal protein bL12 family. As to quaternary structure, homodimer. Part of the ribosomal stalk of the 50S ribosomal subunit. Forms a multimeric L10(L12)X complex, where L10 forms an elongated spine to which 2 to 4 L12 dimers bind in a sequential fashion. Binds GTP-bound translation factors.

Its function is as follows. Forms part of the ribosomal stalk which helps the ribosome interact with GTP-bound translation factors. Is thus essential for accurate translation. This is Large ribosomal subunit protein bL12 from Mycoplasma capricolum subsp. capricolum (strain California kid / ATCC 27343 / NCTC 10154).